We begin with the raw amino-acid sequence, 336 residues long: HTH-type transcriptional repressor PurR (336 aa).

The HTH lacI-type domain occupies 2 to 56 (ATIKDVAKMAGVSTTTVSHVINKTRFVAKDTEEAVLSAIKQLNYSPSAVARSLKV). A DNA-binding region (H-T-H motif) is located at residues 4–23 (IKDVAKMAGVSTTTVSHVIN). A DNA-binding region spans residues 48 to 56 (SAVARSLKV). Residues Tyr73, Lys188, Thr190, Phe219, and Asp273 each contribute to the hypoxanthine site.

In terms of assembly, homodimer.

Its pathway is purine metabolism; purine nucleotide biosynthesis [regulation]. Is the main repressor of the genes involved in the de novo synthesis of purine nucleotides, regulating purB, purC, purEK, purF, purHD, purL, purMN and guaBA expression. PurR is allosterically activated to bind its cognate DNA by binding the purine corepressors, hypoxanthine or guanine, thereby effecting transcription repression. The polypeptide is HTH-type transcriptional repressor PurR (Haemophilus influenzae (strain ATCC 51907 / DSM 11121 / KW20 / Rd)).